The sequence spans 489 residues: MTFRNCVAVDLGASSGRVMLARYQRECRSLTLREIHRFKNGLHSQNGYVTWNVDSLESAIRLGLNKVCEEGIRIDSIGIDTWGVDFVLLDQQGQRVGLPVAYRDSRSNGLMAQAQQQLGKRDIYQRSGIQFLPFNTLYQLRALTEQQPELIPHIAHALLMPDYFSYRLTGKMNWEYTNATTTQLVNINSDDWDESLLAWSGANKAWFGRPTHPGNVIGHWICPQGNEIPVVAVASHDTASAVIASPLNGSRAAYLSSGTWSLMGFESQTPFTNDTALAANITNEGGAEGRYRVLKNIMGLWLLQRVLQERQINDLPALIAATQALPACRFIINPNDDRFINPEAMCSEIQAACRETAQPIPESDAELARCIFDSLALLYADVLHELAQLRGEDFSQLHIVGGGCQNTLLNQLCADACGIRVIAGPVEASTLGNIGIQLMTLDELNNVDDFRQVVSTTANLTTFTPNPDSEIAHYVAQIHSTRQTKELCA.

Residue 13-17 coordinates ATP; sequence ASSGR. Cys68 and Cys222 are joined by a disulfide. Substrate is bound by residues Gly83 and 236 to 238; that span reads HDT. Asp237 functions as the Proton acceptor in the catalytic mechanism. Thr259 is a binding site for ATP. Residue Asn296 participates in substrate binding. ATP is bound at residue Gln304. An intrachain disulfide couples Cys353 to Cys370. Gly402 lines the ATP pocket. A disulfide bridge links Cys413 with Cys417.

It belongs to the rhamnulokinase family. In terms of assembly, monomer. Mg(2+) is required as a cofactor.

The catalysed reaction is L-rhamnulose + ATP = L-rhamnulose 1-phosphate + ADP + H(+). It participates in carbohydrate degradation; L-rhamnose degradation; glycerone phosphate from L-rhamnose: step 2/3. Its function is as follows. Involved in the catabolism of L-rhamnose (6-deoxy-L-mannose). Catalyzes the transfer of the gamma-phosphate group from ATP to the 1-hydroxyl group of L-rhamnulose to yield L-rhamnulose 1-phosphate. The protein is Rhamnulokinase of Escherichia coli (strain 55989 / EAEC).